A 268-amino-acid chain; its full sequence is Leucyl/phenylalanyl-tRNA--protein transferase (268 aa).

This sequence belongs to the L/F-transferase family.

It is found in the cytoplasm. The enzyme catalyses N-terminal L-lysyl-[protein] + L-leucyl-tRNA(Leu) = N-terminal L-leucyl-L-lysyl-[protein] + tRNA(Leu) + H(+). It carries out the reaction N-terminal L-arginyl-[protein] + L-leucyl-tRNA(Leu) = N-terminal L-leucyl-L-arginyl-[protein] + tRNA(Leu) + H(+). The catalysed reaction is L-phenylalanyl-tRNA(Phe) + an N-terminal L-alpha-aminoacyl-[protein] = an N-terminal L-phenylalanyl-L-alpha-aminoacyl-[protein] + tRNA(Phe). Its function is as follows. Functions in the N-end rule pathway of protein degradation where it conjugates Leu, Phe and, less efficiently, Met from aminoacyl-tRNAs to the N-termini of proteins containing an N-terminal arginine or lysine. This Zymomonas mobilis subsp. mobilis (strain ATCC 31821 / ZM4 / CP4) protein is Leucyl/phenylalanyl-tRNA--protein transferase.